A 217-amino-acid polypeptide reads, in one-letter code: RING-H2 finger protein ATL40 (217 aa).

A helical membrane pass occupies residues 28–48 (IFLVTTVSFSIIIIIVFVYYL). The RING-type; atypical zinc-finger motif lies at 100–142 (CAVCLSLLEEKDNARMLPNCKHVFHVSCVDTWLTTQSTCPVCR). Composition is skewed to basic and acidic residues over residues 143 to 160 (TEAE…REGP) and 186 to 217 (DSFR…IERQ). Positions 143-217 (TEAEPSHPRL…QDRELDIERQ (75 aa)) are disordered.

It belongs to the RING-type zinc finger family. ATL subfamily.

Its subcellular location is the membrane. The catalysed reaction is S-ubiquitinyl-[E2 ubiquitin-conjugating enzyme]-L-cysteine + [acceptor protein]-L-lysine = [E2 ubiquitin-conjugating enzyme]-L-cysteine + N(6)-ubiquitinyl-[acceptor protein]-L-lysine.. Its pathway is protein modification; protein ubiquitination. This is RING-H2 finger protein ATL40 (ATL40) from Arabidopsis thaliana (Mouse-ear cress).